Reading from the N-terminus, the 506-residue chain is Nucleosome assembly protein 1-like 3 (506 aa).

Disordered regions lie at residues 1–95 and 157–307; these read MAEA…LGTN and PTEE…KRED. The segment covering 35–70 has biased composition (low complexity); it reads SSSSSSSTSDSSSSSSTSGSSSGSGSSSSSSGSTSS. Positions 157–178 are enriched in acidic residues; that stretch reads PTEEECEWNSEDEEFSSDEEVQ. The span at 196–296 shows a compositional bias: basic and acidic residues; it reads PKENPEVKAE…ERLQDSVDLK (101 aa).

This sequence belongs to the nucleosome assembly protein (NAP) family.

It localises to the nucleus. The protein is Nucleosome assembly protein 1-like 3 (NAP1L3) of Homo sapiens (Human).